A 391-amino-acid polypeptide reads, in one-letter code: Multidrug resistance protein MdtL (391 aa).

12 helical membrane-spanning segments follow: residues 4-24 (FLIC…MYLV), 42-62 (IAFS…GKVA), 69-89 (PVAI…SLAE), 93-113 (LFLA…VVAF), 131-151 (LLNG…HLIM), 158-178 (SLFW…LFIL), 203-222 (FFLS…LTFV), 245-265 (ALTA…LGIF), 269-289 (TLMI…AVSP), 293-313 (VSLF…GVAM), 331-351 (LGIA…VVGI), and 356-376 (MLIG…MFVA).

This sequence belongs to the major facilitator superfamily. DHA1 family. MdtL (TC 2.A.1.2.22) subfamily.

The protein localises to the cell inner membrane. In terms of biological role, confers resistance to chloramphenicol. The protein is Multidrug resistance protein MdtL of Escherichia coli (strain 55989 / EAEC).